The chain runs to 835 residues: Ribonuclease R (835 aa).

Residues 267-593 (RVDLRELPLV…LLHRAIKYLI (327 aa)) enclose the RNB domain. One can recognise an S1 motif domain in the interval 652-733 (GDELEGVIAN…DDKQIDFELV (82 aa)). Residues 739–754 (LRGEGKTAKKRAAEAK) show a composition bias toward basic and acidic residues. Residues 739-835 (LRGEGKTAKK…KTKRTKQDAQ (97 aa)) form a disordered region. Positions 755–764 (RKAKEKKRAA) are enriched in basic residues. Over residues 765-777 (TRSSSKESATARA) the composition is skewed to low complexity. The span at 783–793 (PTKRPEQTDSG) shows a compositional bias: basic and acidic residues. A compositionally biased stretch (basic residues) spans 809–829 (KPKVKKAHKKKPHSKPKKTKR).

The protein belongs to the RNR ribonuclease family. RNase R subfamily.

It localises to the cytoplasm. The enzyme catalyses Exonucleolytic cleavage in the 3'- to 5'-direction to yield nucleoside 5'-phosphates.. Functionally, 3'-5' exoribonuclease that releases 5'-nucleoside monophosphates and is involved in maturation of structured RNAs. The sequence is that of Ribonuclease R from Vibrio parahaemolyticus serotype O3:K6 (strain RIMD 2210633).